We begin with the raw amino-acid sequence, 87 residues long: U3-theraphotoxin-Hhn1a 7 (87 aa).

A signal peptide spans methionine 1–alanine 24. Positions serine 25 to arginine 52 are excised as a propeptide. 3 cysteine pairs are disulfide-bonded: cysteine 54/cysteine 67, cysteine 61/cysteine 72, and cysteine 66/cysteine 79.

This sequence belongs to the neurotoxin 10 (Hwtx-1) family. 51 (Hntx-8) subfamily. Hntx-8 sub-subfamily. As to expression, expressed by the venom gland.

Its subcellular location is the secreted. Functionally, ion channel inhibitor. This chain is U3-theraphotoxin-Hhn1a 7, found in Cyriopagopus hainanus (Chinese bird spider).